Consider the following 330-residue polypeptide: ADP-L-glycero-D-manno-heptose-6-epimerase (330 aa).

Residues Phe11 to Ile12, Asp32 to Asn33, Lys39, Lys54, Glu75 to Ser79, and Asn92 each bind NADP(+). Tyr139 acts as the Proton acceptor in catalysis. Lys143 lines the NADP(+) pocket. Asn168 is a binding site for substrate. Val169 and Lys177 together coordinate NADP(+). The Proton acceptor role is filled by Lys177. Substrate is bound by residues Arg179, His186, Phe200–Tyr203, Arg213, and Tyr292.

This sequence belongs to the NAD(P)-dependent epimerase/dehydratase family. HldD subfamily. Homopentamer. Requires NADP(+) as cofactor.

The enzyme catalyses ADP-D-glycero-beta-D-manno-heptose = ADP-L-glycero-beta-D-manno-heptose. It functions in the pathway nucleotide-sugar biosynthesis; ADP-L-glycero-beta-D-manno-heptose biosynthesis; ADP-L-glycero-beta-D-manno-heptose from D-glycero-beta-D-manno-heptose 7-phosphate: step 4/4. In terms of biological role, catalyzes the interconversion between ADP-D-glycero-beta-D-manno-heptose and ADP-L-glycero-beta-D-manno-heptose via an epimerization at carbon 6 of the heptose. The sequence is that of ADP-L-glycero-D-manno-heptose-6-epimerase from Paraburkholderia phytofirmans (strain DSM 17436 / LMG 22146 / PsJN) (Burkholderia phytofirmans).